The following is a 448-amino-acid chain: Probable glycine dehydrogenase (decarboxylating) subunit 1 (448 aa).

Belongs to the GcvP family. N-terminal subunit subfamily. In terms of assembly, the glycine cleavage system is composed of four proteins: P, T, L and H. In this organism, the P 'protein' is a heterodimer of two subunits.

The catalysed reaction is N(6)-[(R)-lipoyl]-L-lysyl-[glycine-cleavage complex H protein] + glycine + H(+) = N(6)-[(R)-S(8)-aminomethyldihydrolipoyl]-L-lysyl-[glycine-cleavage complex H protein] + CO2. Its function is as follows. The glycine cleavage system catalyzes the degradation of glycine. The P protein binds the alpha-amino group of glycine through its pyridoxal phosphate cofactor; CO(2) is released and the remaining methylamine moiety is then transferred to the lipoamide cofactor of the H protein. This is Probable glycine dehydrogenase (decarboxylating) subunit 1 from Parvibaculum lavamentivorans (strain DS-1 / DSM 13023 / NCIMB 13966).